The primary structure comprises 657 residues: Protein PSK SIMULATOR 1 (657 aa).

Polar residues-rich tracts occupy residues 1-15 (MGGLCSRSSSVNNAP), 26-39 (HLNNNASDLNSHSG), 62-76 (ESFSFPIVSSGSHPQ), and 540-556 (RSPNQKTIQLSSGSHNP). 2 disordered regions span residues 1–80 (MGGL…NIED) and 534–559 (PVKSPIRSPNQKTIQLSSGSHNPSMG). Residue glycine 2 is the site of N-myristoyl glycine attachment.

Its subcellular location is the nucleus. Promotes seedling growth probably via the regulation of phytosulfokine (PSK) signaling; PSK are peptide phytohormones acting as growth factors. Together with PSI2 and PSI3, required during vegetative growth and reproduction. May also have a function in carbohydrate metabolism. The polypeptide is Protein PSK SIMULATOR 1 (Arabidopsis thaliana (Mouse-ear cress)).